We begin with the raw amino-acid sequence, 424 residues long: L-glutamine:2-deoxy-scyllo-inosose aminotransferase (424 aa).

An N6-(pyridoxal phosphate)lysine modification is found at Lys-202.

It belongs to the DegT/DnrJ/EryC1 family. L-glutamine:2-deoxy-scyllo-inosose/scyllo-inosose aminotransferase subfamily. Requires pyridoxal 5'-phosphate as cofactor.

It catalyses the reaction 2-deoxy-L-scyllo-inosose + L-glutamine = 2-deoxy-scyllo-inosamine + 2-oxoglutaramate. The enzyme catalyses 3-amino-2,3-dideoxy-scyllo-inosose + L-glutamine = 2-deoxystreptamine + 2-oxoglutaramate. It functions in the pathway metabolic intermediate biosynthesis; 2-deoxystreptamine biosynthesis; 2-deoxystreptamine from D-glucose 6-phosphate: step 2/4. The protein operates within metabolic intermediate biosynthesis; 2-deoxystreptamine biosynthesis; 2-deoxystreptamine from D-glucose 6-phosphate: step 4/4. Its pathway is antibiotic biosynthesis; neomycin biosynthesis. Functionally, catalyzes the PLP-dependent transamination of 2-deoxy-scyllo-inosose (2-DOI) to form 2-deoxy-scyllo-inosamine (2-DOIA) using L-glutamine as the amino donor. Also catalyzes the transamination of 3-amino-2,3-dideoxy-scyllo-inosose (keto-2-DOIA) into 2-deoxystreptamine (2-DOS). This chain is L-glutamine:2-deoxy-scyllo-inosose aminotransferase (neoB), found in Streptomyces fradiae (Streptomyces roseoflavus).